The primary structure comprises 209 residues: Large ribosomal subunit protein uL3 (209 aa).

Residues Gly-118–Asp-150 are disordered.

Belongs to the universal ribosomal protein uL3 family. As to quaternary structure, part of the 50S ribosomal subunit. Forms a cluster with proteins L14 and L19.

Its function is as follows. One of the primary rRNA binding proteins, it binds directly near the 3'-end of the 23S rRNA, where it nucleates assembly of the 50S subunit. This Bacillus pumilus (strain SAFR-032) protein is Large ribosomal subunit protein uL3.